Consider the following 893-residue polypeptide: UPF0182 protein CLK_3152 (893 aa).

The next 7 membrane-spanning stretches (helical) occupy residues 9-29 (IPLF…NFII), 49-69 (AIII…WMYY), 94-114 (LFFI…SSSY), 154-174 (VIIS…FILE), 202-222 (LAIV…IKIW), 246-266 (FYKI…LSIV), and 273-293 (VSIC…ASFL).

It belongs to the UPF0182 family.

The protein localises to the cell membrane. The polypeptide is UPF0182 protein CLK_3152 (Clostridium botulinum (strain Loch Maree / Type A3)).